Consider the following 1053-residue polypeptide: MSSEESYRAILRYLTNEREPYAPGTEGNVKRKIRKAAACYVVRGGTLYYQRRQRHRKTFAELEVVLQPERRRDLIEAAHLGPGGTHHTRHQTWHYLSKTYWWRGILKQVKDYIKQCSKCQEKLDRSRPISDVSEMLEELGLDLESGEESNESEDDLSNFTSSPTTASKPAKKKPVSKHELVFVDTKGVVKRSSPKHCQAVLKQLNEQRLSNQFCDVTLLIEGEEYKAHKSVLSANSEYFRDLFIEKGAVSSHEAVVDLSGFCKASFLPLLEFAYTSVLSFDFCSMADVAILARHLFMSEVLEICESVHKLMEEKQLTVYKKGEVQTVASTQDLRVQNGGTAPPVASSEGTTTSLPTELGDCEIVLLVNGELPEAEQNGEVGRQPEPQVSSEAESALSSVGCIADSHPEMESVDLITKNNQTELETSNNRENNTVSNIHPKLSKENVISSSPEDSGMGNDISAEDICAEDIPKHRQKVDQPLKDQENLVASTAKTDFGPDDDTYRSRLRQRSVNEGAYIRLHKGMEKKLQKRKAVPKSAVQQVAQKLVQRGKKMKQPKRDAKENTEEASHKCGECGMVFQRRYALIMHKLKHERARDYKCPLCKKQFQYSASLRAHLIRHTRKDAPSSSSSNSTSNEASGTSSEKGRTKREFICSICGRTLPKLYSLRIHMLKHTGVKPHACQVCGKTFIYKHGLKLHQSLHQSQKQFQCELCVKSFVTKRSLQEHMSIHTGESKYLCSVCGKSFHRGSGLSKHFKKHQPKPEVRGYHCTQCEKSFFEARDLRQHMNKHLGVKPFQCQFCDKCYSWKKDWYSHVKSHSVTEPYRCNICGKEFYEKALFRRHVKKATHGKKGRAKQNLERVCEKCGRKFTQLREYRRHMNNHEGVKPFECLTCGVAWADARSLKRHVRTHTGERPYVCPVCSEAYIDARTLRKHMTKFHRDYVPCKIMLEKDTLQFHNQGTQVAHAVSILTAGMQEQESSGPQELETVVVTGETMEALEAVAATEEYPSVSTLSDQSIMQVVNYVLAQQQGQKLSEVAEAIQTVKVEVAHISGGE.

A compositionally biased stretch (acidic residues) spans 141–156; sequence LDLESGEESNESEDDL. The segment at 141–173 is disordered; that stretch reads LDLESGEESNESEDDLSNFTSSPTTASKPAKKK. Low complexity predominate over residues 157 to 168; it reads SNFTSSPTTASK. The BTB domain maps to 214–282; the sequence is CDVTLLIEGE…AYTSVLSFDF (69 aa). Positions 546–566 are disordered; the sequence is LVQRGKKMKQPKRDAKENTEE. Over residues 556–566 the composition is skewed to basic and acidic residues; that stretch reads PKRDAKENTEE. C2H2-type zinc fingers lie at residues 569–591 and 597–619; these read HKCGECGMVFQRRYALIMHKLKH and YKCPLCKKQFQYSASLRAHLIRH. The disordered stretch occupies residues 619–643; sequence HTRKDAPSSSSSNSTSNEASGTSSE. The span at 626 to 642 shows a compositional bias: low complexity; it reads SSSSSNSTSNEASGTSS. 10 consecutive C2H2-type zinc fingers follow at residues 651–673, 679–701, 707–729, 735–757, 766–788, 794–816, 822–846, 858–880, 886–908, and 914–937; these read FICSICGRTLPKLYSLRIHMLKH, HACQVCGKTFIYKHGLKLHQSLH, FQCELCVKSFVTKRSLQEHMSIH, YLCSVCGKSFHRGSGLSKHFKKH, YHCTQCEKSFFEARDLRQHMNKH, FQCQFCDKCYSWKKDWYSHVKSH, YRCNICGKEFYEKALFRRHVKKATH, RVCEKCGRKFTQLREYRRHMNNH, FECLTCGVAWADARSLKRHVRTH, and YVCPVCSEAYIDARTLRKHMTKFH. Lysine 1043 is covalently cross-linked (Glycyl lysine isopeptide (Lys-Gly) (interchain with G-Cter in SUMO2)). Serine 1050 is subject to Phosphoserine.

It is found in the nucleus. Its subcellular location is the nucleolus. Its function is as follows. May be involved in transcriptional regulation. The sequence is that of Zinc finger and BTB domain-containing protein 11 from Homo sapiens (Human).